The primary structure comprises 300 residues: ESX-5 secretion-associated protein EspG5 (300 aa).

This sequence belongs to the EspG family. Interacts specifically with ESX-5-dependent PE/PPE proteins. Forms a 1:1:1 heterotrimeric complex with the PE25/PPE41 dimer, via PPE41. Binding of EspG5 does not cause conformational changes in the PE25/PPE41 dimer. Forms a 1:1:1 heterotrimeric complex with the PE8/PPE15 dimer, via PPE15.

It localises to the cytoplasm. In terms of biological role, specific chaperone for cognate PE/PPE proteins. Plays an important role in preventing aggregation of PE/PPE dimers. In Mycobacterium tuberculosis (strain ATCC 25618 / H37Rv), this protein is ESX-5 secretion-associated protein EspG5.